The primary structure comprises 994 residues: Chromatin modification-related protein vid21 (994 aa).

Disordered regions lie at residues 122 to 275 (PDNL…APPV) and 288 to 308 (PKVDEVEEVHSPEAKVTENDV). Basic and acidic residues-rich tracts occupy residues 158–171 (TIHKNIDVEEKETI), 178–191 (KEVETTAHAEEEKG), 204–233 (LTEELANKSSQEEGVDKQLRVVEATEKEHE), 254–265 (VESKEVKKKEVS), and 288–305 (PKVDEVEEVHSPEAKVTE). A phosphoserine mark is found at serine 298 and serine 378. Positions 475–548 (PKRQNEMPRL…SKNKKPYMQE (74 aa)) constitute an HSA domain. Residues 671–693 (SFMEKKARSDENQLDGNKIKDDN) form a disordered region. The span at 672–693 (FMEKKARSDENQLDGNKIKDDN) shows a compositional bias: basic and acidic residues. Positions 713–773 (KDIRPEAPWL…DCFERWIQVD (61 aa)) constitute a Myb-like domain. Disordered regions lie at residues 857 to 880 (TMTKRAIAPSAASTEKLPPVPSPL) and 975 to 994 (EQIHQLQQRKQTVPTTERTQ). Residues 880–912 (LELSRLKSEREAQIQQIQAQRNFAQLQSQNRAL) are a coiled coil.

It belongs to the EAF1 family. Component of the NuA4 histone acetyltransferase complex.

It localises to the nucleus. In terms of biological role, component of the NuA4 histone acetyltransferase complex which is involved in transcriptional activation of selected genes principally by acetylation of nucleosomal histone H4 and H2A. The NuA4 complex is also involved in DNA repair. The protein is Chromatin modification-related protein vid21 (vid21) of Schizosaccharomyces pombe (strain 972 / ATCC 24843) (Fission yeast).